The chain runs to 62 residues: Large ribosomal subunit protein bL28 (62 aa).

This sequence belongs to the bacterial ribosomal protein bL28 family.

The chain is Large ribosomal subunit protein bL28 from Staphylococcus epidermidis (strain ATCC 12228 / FDA PCI 1200).